Consider the following 305-residue polypeptide: Triplex capsid protein 2 (305 aa).

This sequence belongs to the herpesviridae TRX2 protein family. In terms of assembly, interacts with TRX1 and major capisd protein/MCP.

It localises to the virion. The protein resides in the host nucleus. Structural component of the T=16 icosahedral capsid. The capsid is composed of pentamers and hexamers of major capsid protein/MCP, which are linked together by heterotrimers called triplexes. These triplexes are formed by a single molecule of triplex protein 1/TRX1 and two copies of triplex protein 2/TRX2. Additionally, TRX1 is required for efficient transport of TRX2 to the nucleus, which is the site of capsid assembly. The protein is Triplex capsid protein 2 of Homo sapiens (Human).